The following is a 371-amino-acid chain: COP9 signalosome complex subunit 5 (371 aa).

The MPN domain occupies 51–188 (VKISAVALIK…IGAFRTYPEG (138 aa)). His-134, His-136, and Asp-147 together coordinate Zn(2+). Residues 134 to 147 (HSHPGYGCWLSGID) carry the JAMM motif motif. Low complexity predominate over residues 278-292 (NSSSKLKLKPTQPTT). Disordered stretches follow at residues 278-333 (NSSS…SRIT) and 352-371 (TPLTQSVDDKSAQATVQGRY). The span at 293 to 313 (KGKETTEGSDKKLKKGEKEFS) shows a compositional bias: basic and acidic residues. Residues 323 to 333 (NKVTQESSRIT) are compositionally biased toward polar residues.

It belongs to the peptidase M67A family. CSN5 subfamily. As to quaternary structure, component of the COP9 signalosome (CSN) complex.

Its subcellular location is the cytoplasm. The protein localises to the nucleus. Catalytic Component of the COP9 signalosome (CSN) complex that acts as an regulator of the ubiquitin (Ubl) conjugation pathway by mediating the deneddylation of the cullin subunit of SCF-type E3 ubiquitin-protein ligase complexes. This is COP9 signalosome complex subunit 5 (RRI1) from Cryptococcus neoformans var. neoformans serotype D (strain B-3501A) (Filobasidiella neoformans).